Here is a 1024-residue protein sequence, read N- to C-terminus: Beta-galactosidase (1024 aa).

Substrate-binding residues include Asn-103 and Asp-202. Na(+) is bound at residue Asp-202. Residues Glu-417, His-419, and Glu-462 each coordinate Mg(2+). Residues Glu-462 and 538-541 (EYAH) contribute to the substrate site. Glu-462 serves as the catalytic Proton donor. Glu-538 (nucleophile) is an active-site residue. Mg(2+) is bound at residue Asn-598. The Na(+) site is built by Phe-602 and Asn-605. Substrate-binding residues include Asn-605 and Trp-1000.

It belongs to the glycosyl hydrolase 2 family. As to quaternary structure, homotetramer. Requires Mg(2+) as cofactor. Mn(2+) serves as cofactor. It depends on Na(+) as a cofactor.

It catalyses the reaction Hydrolysis of terminal non-reducing beta-D-galactose residues in beta-D-galactosides.. Its activity is regulated as follows. Inhibited by phenylethyl thio-beta-D-galactoside (PETG), isopropyl thio-beta-D-galactoside (IPTG), L-ribose, D-galactonolactone, lactose and 2-amino-D-galactose. This chain is Beta-galactosidase (lacZ), found in Escherichia coli (strain K12).